We begin with the raw amino-acid sequence, 136 residues long: Large ribosomal subunit protein uL16c (136 aa).

This sequence belongs to the universal ribosomal protein uL16 family. In terms of assembly, part of the 50S ribosomal subunit.

The protein resides in the plastid. Its subcellular location is the chloroplast. This Zea mays (Maize) protein is Large ribosomal subunit protein uL16c.